The primary structure comprises 121 residues: Large ribosomal subunit protein uL14 (121 aa).

Belongs to the universal ribosomal protein uL14 family. Part of the 50S ribosomal subunit. Forms a cluster with proteins L3 and L19. In the 70S ribosome, L14 and L19 interact and together make contacts with the 16S rRNA in bridges B5 and B8.

Functionally, binds to 23S rRNA. Forms part of two intersubunit bridges in the 70S ribosome. The chain is Large ribosomal subunit protein uL14 from Parasynechococcus marenigrum (strain WH8102).